We begin with the raw amino-acid sequence, 306 residues long: Arylesterase (306 aa).

The Involved in the stabilization of the negatively charged intermediate by the formation of the oxyanion hole signature appears at 82–84 (HGG). Active-site residues include Ser-156, Asp-251, and His-281.

In terms of assembly, monomer.

The enzyme catalyses a phenyl acetate + H2O = a phenol + acetate + H(+). It carries out the reaction An aryl dialkyl phosphate + H2O = dialkyl phosphate + an aryl alcohol.. With respect to regulation, completely inhibited by chemical modifiers that are specific to Cys (HgCl(2) and p-chloromercuribenzoic acid), His (diethyl pyrocarbonate) and Ser (diisopropyl fluorophosphate and phenylmethanesulfonyl fluoride). No significant effect with chemical modifiers specific to Lys (pyridoxal 5'-phosphate) and Arg (phenylglyoxal). Not inhibited by inhibitors of A-esterases (paraoxon) or C-esterases (physostigmine/eserine). Activity is also not effected by incubation with 5 mM divalent cations for 30 minutes at 30 degrees Celsius or with 10 mM EDTA for 60 minutes at 75 degrees Celsius. Its function is as follows. Has a broad substrate specificity. Hydrolyzes various p-nitrophenyl phosphates, aromatic esters and p-nitrophenyl fatty acids in vitro. Most active against paraoxon, phenyl acetate and p-nitrophenyl caproate (C6), respectively. Also has tributyrinase activity, but shows no hydrolytic activity toward other triacylglycerols including tricaprylin, trimyristin, tripalmitin or triolein in vitro. In Saccharolobus solfataricus (Sulfolobus solfataricus), this protein is Arylesterase.